A 357-amino-acid polypeptide reads, in one-letter code: Adenylate isopentenyltransferase 1, chloroplastic (357 aa).

The transit peptide at 1 to 71 (MTELNFHLLP…NRKDKVVVIL (71 aa)) directs the protein to the chloroplast. Residues 20 to 39 (TTTSPSFSSHSSSSSSLLSF) are compositionally biased toward low complexity. Positions 20 to 58 (TTTSPSFSSHSSSSSSLLSFTKRRRKHQPLVSSIRMEQS) are disordered. 72–79 (GATGAGKS) contacts ATP.

It belongs to the IPP transferase family. In terms of tissue distribution, expressed in the vascular stele of the roots, in the xylem precursor cell files in the root tip, in leaf axils, ovules, and immature seeds.

The protein resides in the plastid. The protein localises to the chloroplast. It catalyses the reaction dimethylallyl diphosphate + AMP = N(6)-(dimethylallyl)adenosine 5'-phosphate + diphosphate. The enzyme catalyses dimethylallyl diphosphate + ADP = N(6)-(dimethylallyl)adenosine 5'-diphosphate + diphosphate. It carries out the reaction dimethylallyl diphosphate + ATP = N(6)-(dimethylallyl)adenosine 5'-triphosphate + diphosphate. In terms of biological role, involved in cytokinin biosynthesis. Catalyzes the transfer of an isopentenyl group from dimethylallyl diphosphate (DMAPP) to ATP, ADP and AMP. Adenine, adenosine, isopentenylpyrophosphate and 1-hydroxy-2-methyl-2-(E)-butenyl 4-diphosphate (HMBDP) are not used as substrates. The protein is Adenylate isopentenyltransferase 1, chloroplastic (IPT1) of Arabidopsis thaliana (Mouse-ear cress).